Consider the following 127-residue polypeptide: Small ribosomal subunit protein uS12 (127 aa).

Asp-89 carries the 3-methylthioaspartic acid modification.

The protein belongs to the universal ribosomal protein uS12 family. Part of the 30S ribosomal subunit. Contacts proteins S8 and S17. May interact with IF1 in the 30S initiation complex.

In terms of biological role, with S4 and S5 plays an important role in translational accuracy. Interacts with and stabilizes bases of the 16S rRNA that are involved in tRNA selection in the A site and with the mRNA backbone. Located at the interface of the 30S and 50S subunits, it traverses the body of the 30S subunit contacting proteins on the other side and probably holding the rRNA structure together. The combined cluster of proteins S8, S12 and S17 appears to hold together the shoulder and platform of the 30S subunit. The chain is Small ribosomal subunit protein uS12 from Aliarcobacter butzleri (strain RM4018) (Arcobacter butzleri).